The primary structure comprises 1383 residues: PAS domain-containing serine/threonine-protein kinase (1383 aa).

Met1 is modified (N-acetylmethionine). At Ser19 the chain carries Phosphoserine. Phosphothreonine is present on Thr31. PAS domains lie at 117 to 188 and 333 to 400; these read SGSL…VEAD and YQAS…SVQL. At Ser1000 the chain carries Phosphoserine. The region spanning 1059–1311 is the Protein kinase domain; that stretch reads YNTISPLGSG…LEKLIRDPWV (253 aa). ATP contacts are provided by residues 1065-1073, Lys1088, and 1142-1149; these read LGSGAFGFV and EKHGSGMD. The active-site Proton acceptor is Asp1188. Asp1206 is an ATP binding site. A phosphothreonine; by autocatalysis mark is found at Thr1221 and Thr1225. The segment at 1344 to 1383 is disordered; sequence GSRSPSEMAQREGLCGPPAPRETRGDQHCLHLKDPSLPVS. The segment covering 1364–1377 has biased composition (basic and acidic residues); the sequence is RETRGDQHCLHLKD.

This sequence belongs to the protein kinase superfamily. CAMK Ser/Thr protein kinase family. Post-translationally, autophosphorylated on Thr-1221 and Thr-1225. Autophosphorylation is activated by phospholipids. As to expression, ubiquitously expressed. Strongly up-regulated in postmeiotic germ cells during spermatogenesis.

Its subcellular location is the cytoplasm. The protein resides in the nucleus. It carries out the reaction L-seryl-[protein] + ATP = O-phospho-L-seryl-[protein] + ADP + H(+). The enzyme catalyses L-threonyl-[protein] + ATP = O-phospho-L-threonyl-[protein] + ADP + H(+). Its activity is regulated as follows. Protein kinase activity is inhibited by the first PAS domain: binding of an unidentified ligand desinhibits the protein kinase activity. May be activated by autophosphorylation on Thr-1221 and Thr-1225. Autophosphorylation is enhanced upon phosphatidylinositol monophosphate (phosphatidylinositol 4-phosphate) binding and inhibited upon phosphatidylinositol bi- and tri-phosphate binding. In contrast, phosphorylation of target proteins is inhibited upon all phosphatidylinositol-binding (phosphatidylinositol mono- bi- and tri-phosphate). Serine/threonine-protein kinase involved in energy homeostasis and protein translation. Phosphorylates EEF1A1, GYS1, PDX1 and RPS6. Probably plays a role under changing environmental conditions (oxygen, glucose, nutrition), rather than under standard conditions. Acts as a sensor involved in energy homeostasis: regulates glycogen synthase synthesis by mediating phosphorylation of GYS1, leading to GYS1 inactivation. May be involved in glucose-stimulated insulin production in pancreas and regulation of glucagon secretion by glucose in alpha cells; however such data require additional evidences. May play a role in regulation of protein translation by phosphorylating EEF1A1, leading to increase translation efficiency. May also participate in respiratory regulation. In Mus musculus (Mouse), this protein is PAS domain-containing serine/threonine-protein kinase (Pask).